Consider the following 353-residue polypeptide: S-adenosylmethionine decarboxylase proenzyme (353 aa).

Catalysis depends on residues glutamate 9 and glutamate 12. The Schiff-base intermediate with substrate; via pyruvic acid role is filled by serine 69. A Pyruvic acid (Ser); by autocatalysis modification is found at serine 69. The Proton donor; for catalytic activity role is filled by cysteine 83. Catalysis depends on proton acceptor; for processing activity residues serine 232 and histidine 245.

Belongs to the eukaryotic AdoMetDC family. It depends on pyruvate as a cofactor. Post-translationally, is synthesized initially as an inactive proenzyme. Formation of the active enzyme involves a self-maturation process in which the active site pyruvoyl group is generated from an internal serine residue via an autocatalytic post-translational modification. Two non-identical subunits are generated from the proenzyme in this reaction, and the pyruvate is formed at the N-terminus of the alpha chain, which is derived from the carboxyl end of the proenzyme. The post-translation cleavage follows an unusual pathway, termed non-hydrolytic serinolysis, in which the side chain hydroxyl group of the serine supplies its oxygen atom to form the C-terminus of the beta chain, while the remainder of the serine residue undergoes an oxidative deamination to produce ammonia and the pyruvoyl group blocking the N-terminus of the alpha chain.

It catalyses the reaction S-adenosyl-L-methionine + H(+) = S-adenosyl 3-(methylsulfanyl)propylamine + CO2. It functions in the pathway amine and polyamine biosynthesis; S-adenosylmethioninamine biosynthesis; S-adenosylmethioninamine from S-adenosyl-L-methionine: step 1/1. The polypeptide is S-adenosylmethionine decarboxylase proenzyme (SAMDC) (Pisum sativum (Garden pea)).